Here is a 209-residue protein sequence, read N- to C-terminus: Protein N-terminal glutamine amidohydrolase (209 aa).

Active-site residues include Cys30, His83, and Asp99.

This sequence belongs to the NTAQ1 family. In terms of assembly, monomer. As to expression, widely expressed.

The protein localises to the cytoplasm. Its subcellular location is the cytosol. The protein resides in the nucleus. It catalyses the reaction N-terminal L-glutaminyl-[protein] + H2O = N-terminal L-glutamyl-[protein] + NH4(+). Its function is as follows. Mediates the side-chain deamidation of N-terminal glutamine residues to glutamate, an important step in N-end rule pathway of protein degradation. Conversion of the resulting N-terminal glutamine to glutamate renders the protein susceptible to arginylation, polyubiquitination and degradation as specified by the N-end rule. Does not act on substrates with internal or C-terminal glutamine and does not act on non-glutamine residues in any position. Does not deaminate acetylated N-terminal glutamine. With the exception of proline, all tested second-position residues on substrate peptides do not greatly influence the activity. In contrast, a proline at position 2, virtually abolishes deamidation of N-terminal glutamine. This is Protein N-terminal glutamine amidohydrolase (Ntaq1) from Mus musculus (Mouse).